A 106-amino-acid chain; its full sequence is NADH-quinone oxidoreductase subunit K (106 aa).

A run of 3 helical transmembrane segments spans residues 10–30 (IHYY…GVMV), 35–55 (VLIF…FVTF), and 67–87 (VVFF…AIVI).

This sequence belongs to the complex I subunit 4L family. In terms of assembly, NDH-1 is composed of 14 different subunits. Subunits NuoA, H, J, K, L, M, N constitute the membrane sector of the complex.

The protein resides in the cell inner membrane. It carries out the reaction a quinone + NADH + 5 H(+)(in) = a quinol + NAD(+) + 4 H(+)(out). Functionally, NDH-1 shuttles electrons from NADH, via FMN and iron-sulfur (Fe-S) centers, to quinones in the respiratory chain. The immediate electron acceptor for the enzyme in this species is believed to be ubiquinone. Couples the redox reaction to proton translocation (for every two electrons transferred, four hydrogen ions are translocated across the cytoplasmic membrane), and thus conserves the redox energy in a proton gradient. This chain is NADH-quinone oxidoreductase subunit K, found in Leptospira interrogans serogroup Icterohaemorrhagiae serovar copenhageni (strain Fiocruz L1-130).